Here is a 620-residue protein sequence, read N- to C-terminus: Membralin (620 aa).

The segment at 1–33 is disordered; sequence MSEHVEPAAPGPGPNGGGGGPAPARGPRTPNLN. The residue at position 2 (S2) is an N-acetylserine. The segment covering 22-31 has biased composition (low complexity); it reads APARGPRTPN. Position 29 is a phosphothreonine (T29). Residues 70 to 90 form a helical membrane-spanning segment; that stretch reads FFVLLKALFVLFVLAYIHIVF. An N-linked (GlcNAc...) asparagine glycan is attached at N189. 3 helical membrane passes run 302–322, 346–366, and 426–446; these read TSYL…SMLL, IAFP…MEAI, and YSSL…IYFF. 2 disordered regions span residues 474-517 and 568-620; these read TPTA…GPVA and SPLG…EVGS. 2 stretches are compositionally biased toward low complexity: residues 499-517 and 568-593; these read PPAL…GPVA and SPLG…AASD.

Belongs to the membralin family. Interacts with ERLIN2.

It localises to the endoplasmic reticulum membrane. Functionally, may have a role in the ERAD pathway required for clearance of misfolded proteins in the endoplasmic reticulum (ER). Promotes survival of motor neurons, probably by protecting against ER stress. The chain is Membralin (TMEM259) from Homo sapiens (Human).